Here is a 287-residue protein sequence, read N- to C-terminus: 5'-3' exonuclease (287 aa).

In terms of domain architecture, 5'-3' exonuclease spans 172–270; it reads IYPKEFIDLL…ITSEEITLKK (99 aa).

In terms of biological role, 5'-3' exonuclease acting preferentially on double-stranded DNA. This chain is 5'-3' exonuclease (pol), found in Buchnera aphidicola subsp. Schizaphis graminum (strain Sg).